The primary structure comprises 252 residues: uncharacterized protein (252 aa).

Positions 96-238 (FRRFTPRARN…ITTLASLTGA (143 aa)) constitute a Clp R domain. Repeat regions lie at residues 99–164 (FTPR…PAVT) and 172–238 (FSGP…LTGA).

Belongs to the ClpA/ClpB family. ClpC subfamily.

This is an uncharacterized protein from Mycobacterium bovis (strain ATCC BAA-935 / AF2122/97).